The following is a 185-amino-acid chain: Ribosome-recycling factor (185 aa).

The protein belongs to the RRF family.

The protein resides in the cytoplasm. Its function is as follows. Responsible for the release of ribosomes from messenger RNA at the termination of protein biosynthesis. May increase the efficiency of translation by recycling ribosomes from one round of translation to another. This chain is Ribosome-recycling factor, found in Alkaliphilus oremlandii (strain OhILAs) (Clostridium oremlandii (strain OhILAs)).